The primary structure comprises 252 residues: Small ribosomal subunit protein eS1A (252 aa).

An N-acetylalanine; partial modification is found at alanine 2.

The protein belongs to the eukaryotic ribosomal protein eS1 family. As to quaternary structure, component of the small ribosomal subunit (SSU). Mature yeast ribosomes consist of a small (40S) and a large (60S) subunit. The 40S small subunit contains 1 molecule of ribosomal RNA (18S rRNA) and at least 33 different proteins. The large 60S subunit contains 3 rRNA molecules (25S, 5.8S and 5S rRNA) and at least 46 different proteins. eS1 interacts directly with uS11 and eS26, which form part of the mRNA exit tunnel.

It localises to the cytoplasm. Functionally, component of the ribosome, a large ribonucleoprotein complex responsible for the synthesis of proteins in the cell. The small ribosomal subunit (SSU) binds messenger RNAs (mRNAs) and translates the encoded message by selecting cognate aminoacyl-transfer RNA (tRNA) molecules. The large subunit (LSU) contains the ribosomal catalytic site termed the peptidyl transferase center (PTC), which catalyzes the formation of peptide bonds, thereby polymerizing the amino acids delivered by tRNAs into a polypeptide chain. The nascent polypeptides leave the ribosome through a tunnel in the LSU and interact with protein factors that function in enzymatic processing, targeting, and the membrane insertion of nascent chains at the exit of the ribosomal tunnel. This is Small ribosomal subunit protein eS1A (rps101) from Schizosaccharomyces pombe (strain 972 / ATCC 24843) (Fission yeast).